Reading from the N-terminus, the 213-residue chain is THAP domain-containing protein 1 (213 aa).

Residues 1 to 81 form a THAP-type zinc finger; sequence MVQSCSAYGC…LKENAVPTIF (81 aa). Residues 134–137 carry the HCFC1-binding motif (HBM) motif; that stretch reads DHNY. Residues 139 to 185 form an involved in homodimer formation region; sequence VEDTMHQRKRIHQLEQQVEKLRKKLKTAQQRCRRQERQLEKLKEVVH. The stretch at 139–190 forms a coiled coil; it reads VEDTMHQRKRIHQLEQQVEKLRKKLKTAQQRCRRQERQLEKLKEVVHFQKEK.

This sequence belongs to the THAP1 family. In terms of assembly, homodimer. Interacts with PAWR. Component of a THAP1/THAP3-HCFC1-OGT complex that contains, either THAP1 or THAP3, HCFC1 and OGT. Interacts with OGT. Interacts (via the HBM) with HCFC1 (via the Kelch-repeat domain); the interaction recruits HCFC1 to the RRM1 promoter. In terms of tissue distribution, highly expressed in heart, skeletal muscle, kidney and liver. Weaker expression in brain and placenta.

Its subcellular location is the nucleus. The protein resides in the nucleoplasm. It localises to the PML body. DNA-binding transcription regulator that regulates endothelial cell proliferation and G1/S cell-cycle progression. Specifically binds the 5'-[AT]NTNN[GT]GGCA[AGT]-3' core DNA sequence and acts by modulating expression of pRB-E2F cell-cycle target genes, including RRM1. Component of a THAP1/THAP3-HCFC1-OGT complex that is required for the regulation of the transcriptional activity of RRM1. May also have pro-apoptotic activity by potentiating both serum-withdrawal and TNF-induced apoptosis. In Homo sapiens (Human), this protein is THAP domain-containing protein 1 (THAP1).